Here is a 790-residue protein sequence, read N- to C-terminus: DNA ligase 1 (790 aa).

Residues 1–64 (MLAIRSSNYL…AFDALMSNAR (64 aa)) constitute a mitochondrion transit peptide. The tract at residues 64-142 (RAAAKKKTPQ…TGAKKAKTLS (79 aa)) is disordered. Positions 68 to 75 (KKKTPQTT) match the Nuclear localization signal 1 motif. Residues 116–128 (DSANPRSDTSSIA) are compositionally biased toward polar residues. The interval 337–346 (KLRLGFSGQT) is interaction with target DNA. Position 442 (Glu442) interacts with ATP. The active-site N6-AMP-lysine intermediate is the Lys444. Arg449 and Arg465 together coordinate ATP. A Mg(2+)-binding site is contributed by Glu497. The Nuclear localization signal 2 signature appears at 505–512 (KKKILPFQ). Positions 518 to 520 (ARK) are interaction with target DNA. Residue Glu596 coordinates Mg(2+). ATP-binding residues include Lys601, Arg614, and Lys620. Residues 757–790 (DKKPEEATSSEQIADLYQAQKHNHPSNEVKGDDD) form a disordered region. The span at 781 to 790 (PSNEVKGDDD) shows a compositional bias: basic and acidic residues.

The protein belongs to the ATP-dependent DNA ligase family. Requires Mg(2+) as cofactor. As to expression, expressed in all vegetative and reproductive tissues.

Its subcellular location is the mitochondrion. It localises to the nucleus. The catalysed reaction is ATP + (deoxyribonucleotide)n-3'-hydroxyl + 5'-phospho-(deoxyribonucleotide)m = (deoxyribonucleotide)n+m + AMP + diphosphate.. In terms of biological role, essential protein. DNA ligase that seals nicks in double-stranded DNA during DNA replication, DNA recombination and DNA repair. Involved in repair of both single strand breaks (SSBs) and double strand breaks (DSBs). Required in the endosperm for embryogenesis, probably to repair DNA-breaks generated by DME. In Arabidopsis thaliana (Mouse-ear cress), this protein is DNA ligase 1 (LIG1).